The chain runs to 75 residues: DNA-directed RNA polymerase subunit omega (75 aa).

The protein belongs to the RNA polymerase subunit omega family. As to quaternary structure, in cyanobacteria the RNAP catalytic core is composed of 2 alpha, 1 beta, 1 beta', 1 gamma and 1 omega subunit. When a sigma factor is associated with the core the holoenzyme is formed, which can initiate transcription.

The catalysed reaction is RNA(n) + a ribonucleoside 5'-triphosphate = RNA(n+1) + diphosphate. Functionally, promotes RNA polymerase assembly. Latches the N- and C-terminal regions of the beta' subunit thereby facilitating its interaction with the beta and alpha subunits. The protein is DNA-directed RNA polymerase subunit omega of Synechococcus sp. (strain CC9311).